Here is a 340-residue protein sequence, read N- to C-terminus: Uroporphyrinogen decarboxylase (340 aa).

Substrate contacts are provided by residues 21–25 (RQAGR), D71, Y147, S202, and H315.

It belongs to the uroporphyrinogen decarboxylase family. As to quaternary structure, homodimer.

The protein localises to the cytoplasm. It catalyses the reaction uroporphyrinogen III + 4 H(+) = coproporphyrinogen III + 4 CO2. The protein operates within porphyrin-containing compound metabolism; protoporphyrin-IX biosynthesis; coproporphyrinogen-III from 5-aminolevulinate: step 4/4. Functionally, catalyzes the decarboxylation of four acetate groups of uroporphyrinogen-III to yield coproporphyrinogen-III. The polypeptide is Uroporphyrinogen decarboxylase (Nautilia profundicola (strain ATCC BAA-1463 / DSM 18972 / AmH)).